Consider the following 172-residue polypeptide: Adenine phosphoribosyltransferase (172 aa).

The protein belongs to the purine/pyrimidine phosphoribosyltransferase family. As to quaternary structure, homodimer.

Its subcellular location is the cytoplasm. The enzyme catalyses AMP + diphosphate = 5-phospho-alpha-D-ribose 1-diphosphate + adenine. The protein operates within purine metabolism; AMP biosynthesis via salvage pathway; AMP from adenine: step 1/1. Functionally, catalyzes a salvage reaction resulting in the formation of AMP, that is energically less costly than de novo synthesis. The chain is Adenine phosphoribosyltransferase from Roseiflexus sp. (strain RS-1).